We begin with the raw amino-acid sequence, 236 residues long: Sugar fermentation stimulation protein homolog (236 aa).

This sequence belongs to the SfsA family.

In Methylobacterium nodulans (strain LMG 21967 / CNCM I-2342 / ORS 2060), this protein is Sugar fermentation stimulation protein homolog.